Reading from the N-terminus, the 490-residue chain is Monocarboxylate transporter 3 (490 aa).

Residues 1 to 14 (MGAGGPRRGAGPPD) are Cytoplasmic-facing. Residues 15–35 (GGWGWVVLGACFVITGFAYGF) traverse the membrane as a helical segment. The Extracellular portion of the chain corresponds to 36 to 58 (PKAVSVFFRELKRDFGAGYSDTA). A helical transmembrane segment spans residues 59 to 79 (WVSSIMLAMLYGTGPLSSILV). Residues 80-85 (TRFGCR) are Cytoplasmic-facing. A helical membrane pass occupies residues 86-106 (PVMLAGGLLASAGMILASFAS). Residues 107–115 (RLLELYLTA) lie on the Extracellular side of the membrane. A helical membrane pass occupies residues 116 to 136 (GVLTGLGLALNFQPSLIMLGL). Over 137–147 (YFERRRPLANG) the chain is Cytoplasmic. Residues 148–168 (LAAAGSPVFLSTLSPLGQLLG) traverse the membrane as a helical segment. At 169–172 (ERFG) the chain is on the extracellular side. The chain crosses the membrane as a helical span at residues 173–193 (WRGGFLLFGGLLLHCCACGAV). At 194-230 (MRPPPGPQPRPDPAPPGGRARHRQLLDLAVCTDRTFM) the chain is on the cytoplasmic side. A helical transmembrane segment spans residues 231-251 (VYMVTKFLMALGLFVPAILLV). The Extracellular portion of the chain corresponds to 252–257 (NYAKDA). A helical membrane pass occupies residues 258 to 278 (GVPDAEAAFLLSIVGFVDIVA). Over 279–293 (RPACGALAGLGRLRP) the chain is Cytoplasmic. Residues 294–314 (HVPYLFSLALLANGLTDLISA) traverse the membrane as a helical segment. Topologically, residues 315–318 (RARS) are extracellular. A helical transmembrane segment spans residues 319 to 339 (YGTLVAFCIAFGLSYGMVGAL). At 340-352 (QFEVLMATVGAPR) the chain is on the cytoplasmic side. The chain crosses the membrane as a helical span at residues 353 to 373 (FPSALGLVLLVEAVAVLIGPP). At 374–386 (SAGRLVDALKNYE) the chain is on the extracellular side. Residues 387 to 407 (IIFYLAGSEVVLAGVFMAVTT) form a helical membrane-spanning segment. Residues 408 to 490 (YCCQRCSKDI…GGHEAHGQNA (83 aa)) lie on the Cytoplasmic side of the membrane. The segment at 419 to 490 (PGPSAEGGTS…GGHEAHGQNA (72 aa)) is disordered. 2 basolateral sorting signal regions span residues 426-460 (GTSD…VLSP) and 461-480 (RAGS…HESV). Residues 475-490 (LSHESVGGHEAHGQNA) show a composition bias toward basic and acidic residues.

Belongs to the major facilitator superfamily. Monocarboxylate porter (TC 2.A.1.13) family. In terms of tissue distribution, retinal pigment epithelium.

The protein localises to the basolateral cell membrane. The catalysed reaction is (S)-lactate(in) + H(+)(in) = (S)-lactate(out) + H(+)(out). Its function is as follows. Probable retinal pigment epithelium (RPE)-specific proton-coupled L-lactate transporter. May facilitate transport of lactate and H(+) out of the retina and could therefore play a role in pH and ion homeostasis of the outer retina. The polypeptide is Monocarboxylate transporter 3 (Slc16a8) (Rattus norvegicus (Rat)).